Consider the following 129-residue polypeptide: MQITLLKSKLHRVTTTHSELDYEGSCAIDGHFLEVAGIREYEQIQIYNVNNGNRFTTYAIRAEENTGIISVNGAAAHKAAPGDLLIIATYASMDEKEAEEFKPIMVYFDEKNQITHTRNTIPKQMQQLA.

Ser-25 acts as the Schiff-base intermediate with substrate; via pyruvic acid in catalysis. At Ser-25 the chain carries Pyruvic acid (Ser). Thr-57 contributes to the substrate binding site. Tyr-58 functions as the Proton donor in the catalytic mechanism. 73–75 provides a ligand contact to substrate; sequence GAA.

The protein belongs to the PanD family. Heterooctamer of four alpha and four beta subunits. Pyruvate serves as cofactor. Post-translationally, is synthesized initially as an inactive proenzyme, which is activated by self-cleavage at a specific serine bond to produce a beta-subunit with a hydroxyl group at its C-terminus and an alpha-subunit with a pyruvoyl group at its N-terminus.

Its subcellular location is the cytoplasm. The catalysed reaction is L-aspartate + H(+) = beta-alanine + CO2. It participates in cofactor biosynthesis; (R)-pantothenate biosynthesis; beta-alanine from L-aspartate: step 1/1. Catalyzes the pyruvoyl-dependent decarboxylation of aspartate to produce beta-alanine. The sequence is that of Aspartate 1-decarboxylase from Hydrogenovibrio crunogenus (strain DSM 25203 / XCL-2) (Thiomicrospira crunogena).